Reading from the N-terminus, the 528-residue chain is Calcium-dependent protein kinase 4 (528 aa).

The segment at 1-36 is disordered; the sequence is MGQEVSSVNNTKNEHHKTNKKSLKGGNERHEMKESS. G2 is lipidated: N-myristoyl glycine. Positions 14–23 are enriched in basic residues; sequence EHHKTNKKSL. Residues 71–329 enclose the Protein kinase domain; the sequence is KGIKILGKGS…RDALEHEWIK (259 aa). Residues 76 to 84 and K99 each bind ATP; that span reads LGKGSFGEV. The active-site Proton acceptor is D193. Residues 350–358 carry the J domain autoinhibitory motif motif; sequence NIRQFQSTQ. The j domain stretch occupies residues 350–386; it reads NIRQFQSTQKLAQAALLYMGSKLTTIDETKELTKIFK. The J domain EF-hand interaction motif motif lies at 359–368; the sequence is KLAQAALLYM. 4 EF-hand domains span residues 376–411, 427–458, 459–494, and 496–528; these read DETKELTKIFKKMDKNGDGQLDRNELIIGYKELLKL, EVDQILNSIDLDQNGYIEYSEFLTVSIDRKLL, LSTERLEKAFKLFDKDGSGKISANELAQLFGLSDVS, and ECWKTVLKEVDQNNDGEIDFKEFRDMLVKLCNY. Ca(2+) contacts are provided by D389, N391, D393, Q395, E400, D436, D438, N440, Y442, E447, D472, D474, S476, K478, E483, D506, N508, D510, E512, and E517.

Belongs to the protein kinase superfamily. Ser/Thr protein kinase family. CDPK subfamily. As to quaternary structure, may interact with the pre-replication MCM complex prior male gametogenesis activation. The cofactor is Mg(2+). Myristoylated; myristoylation may target it to different subcellular compartments. During male gametogenesis, myristoylation is required to initiate DNA replication but not for mitotic spindle assembly or axoneme activation. In terms of processing, not palmitoylated. Post-translationally, may be autophosphorylated on Thr-234 in vitro.

The protein resides in the cytoplasm. It localises to the cell membrane. It catalyses the reaction L-seryl-[protein] + ATP = O-phospho-L-seryl-[protein] + ADP + H(+). It carries out the reaction L-threonyl-[protein] + ATP = O-phospho-L-threonyl-[protein] + ADP + H(+). With respect to regulation, activated by calcium. Upon calcium binding to the EF-hand domains, the C-terminus of the junction domain (J domain) undergoes a conformational change which results in the dissociation of the pseudo-substrate inhibitory motif from the catalytic domain. This, in turn, may facilitate the autophosphorylation of the activation loop at Thr-234, which leads to the kinase activation. Intracellular calcium increase is triggered by xanthurenic acid (XA), a small mosquito molecule that induces the differentiation of specialized transmission stages, the gametocytes, into male and female gametes. Activated by a decrease in temperature (20 degrees Celsius) and an increase in pH (7.6) occurring when the parasite is ingested by in the mosquito. Calcium-dependent protein kinase which acts as a sensor and effector of intracellular Ca(2+) levels probably in part downstream of cGMP-activated PKG kinase. Plays a central role in the host erythrocytes and hepatocytes infection cycles, sexual reproduction and mosquito transmission of the parasite. During the liver stage, involved in sporozoite motility and thus in sporozoite invasion of host hepatocytes, probably together with CDPK1 and CDPK5. Involved in merosome egress from host hepatocytes, probably together with CDPK5. During the asexual blood stage, involved in merozoite invasion of host erythrocytes and motility by stabilizing the inner membrane complex, a structure below the plasma membrane which acts as an anchor for the glidosome, an acto-myosin motor. Required for cell cycle progression in the male gametocyte. During male gametogenesis in the mosquito gut, required to initiate the first round of DNA replication, probably by facilitating the assembly of the pre-replicative MCM complex, to assemble the first mitotic spindle and, at the end of gametogenesis, to initiate axoneme motility, cytokinesis and subsequent exflagellation. For each of these steps, may phosphorylate SOC1, SOC2 and SOC3, respectively. Together with CDPK1, regulates ookinete gliding in the mosquito host midgut. This is Calcium-dependent protein kinase 4 from Plasmodium falciparum (isolate 3D7).